A 270-amino-acid polypeptide reads, in one-letter code: Shikimate dehydrogenase (NADP(+)) (270 aa).

Residues 14-16 (SLS) and Thr61 each bind shikimate. Lys65 functions as the Proton acceptor in the catalytic mechanism. Asp77 lines the NADP(+) pocket. Residues Asn86 and Asp101 each contribute to the shikimate site. NADP(+) contacts are provided by residues 125–129 (GNGGA) and Ile210. Residue Tyr212 coordinates shikimate. Gly233 is an NADP(+) binding site.

It belongs to the shikimate dehydrogenase family. Homodimer.

It catalyses the reaction shikimate + NADP(+) = 3-dehydroshikimate + NADPH + H(+). It participates in metabolic intermediate biosynthesis; chorismate biosynthesis; chorismate from D-erythrose 4-phosphate and phosphoenolpyruvate: step 4/7. In terms of biological role, involved in the biosynthesis of the chorismate, which leads to the biosynthesis of aromatic amino acids. Catalyzes the reversible NADPH linked reduction of 3-dehydroshikimate (DHSA) to yield shikimate (SA). In Clostridium beijerinckii (strain ATCC 51743 / NCIMB 8052) (Clostridium acetobutylicum), this protein is Shikimate dehydrogenase (NADP(+)).